The chain runs to 435 residues: MRLTHVLSHTLGLLALGATAEAFSRSREAACSPKKPFRPLPTSSSRDKTCHVRSHGDGSDDSDYILSALHQCNHGGKVVFDEDKEYIIGTALNMTFLKNIDLEVLGTILFTNDTDYWQANSFKQGFQNATTFFQLGGEDVNMYGGGTINGNGQVWYDLYAEDDLILRPILMGIIGLNGGTIGPLKLRYSPQYYHFVANSSNVLFDGIDISGYSKSDNEAKNTDGWDTYRSNNIVIQNSVINNGDDCVSFKPNSTNILVQNLHCNGSHGISVGSLGQYKDEVDIVENVYVYNISMFNASDMARIKVWPGTPSALSADLQGGGGSGSVKNITYDTALIDNVDWAIEITQCYGQKNTTLCNEYPSSLTISDVHIKNFRGTTSGSEDPYVGTIVCSSPDTCSDIYTSNINVTSPDGTNDFVCDNVDESLLSVNCTATSD.

The signal sequence occupies residues 1-22; that stretch reads MRLTHVLSHTLGLLALGATAEA. Residues 31–55 are disordered; it reads CSPKKPFRPLPTSSSRDKTCHVRSH. The segment covering 45-55 has biased composition (basic and acidic residues); sequence SRDKTCHVRSH. N93, N112, N128, and N198 each carry an N-linked (GlcNAc...) asparagine glycan. 2 PbH1 repeats span residues 199–229 and 230–251; these read SSNV…DTYR and SNNI…SFKP. D244 serves as the catalytic Proton donor. A disulfide bond links C246 and C263. Residues N252 and N264 are each glycosylated (N-linked (GlcNAc...) asparagine). The stretch at 253-273 is one PbH1 3 repeat; that stretch reads STNILVQNLHCNGSHGISVGS. The active site involves H267. N-linked (GlcNAc...) asparagine glycosylation is found at N291, N296, N328, and N353. Residues 326–347 form a PbH1 4 repeat; the sequence is VKNITYDTALIDNVDWAIEITQ. Residues 361–409 form a PbH1 5 repeat; sequence PSSLTISDVHIKNFRGTTSGSEDPYVGTIVCSSPDTCSDIYTSNINVTS. The cysteines at positions 391 and 397 are disulfide-linked. N406 and N429 each carry an N-linked (GlcNAc...) asparagine glycan.

The protein belongs to the glycosyl hydrolase 28 family.

Its subcellular location is the secreted. It carries out the reaction [(1-&gt;4)-alpha-D-galacturonosyl](n) + H2O = alpha-D-galacturonate + [(1-&gt;4)-alpha-D-galacturonosyl](n-1). Its function is as follows. Specific in hydrolyzing the terminal glycosidic bond of polygalacturonic acid and oligogalacturonates. The protein is Probable exopolygalacturonase X (pgaX) of Aspergillus niger (strain ATCC MYA-4892 / CBS 513.88 / FGSC A1513).